The primary structure comprises 227 residues: uncharacterized protein (227 aa).

2 consecutive transmembrane segments (helical) span residues Phe-7–Ala-24 and Val-135–Leu-157.

It belongs to the TMEM9 family.

Its subcellular location is the membrane. This is an uncharacterized protein from Drosophila melanogaster (Fruit fly).